The primary structure comprises 420 residues: Napsin-A (420 aa).

A signal peptide spans 1–25 (MSPPPLLQPLLLLLPLLNVEPSGAT). Residues 26 to 63 (LIRIPLHRVQPGRRILNLLRGWREPAELPKLGAPSPGD) constitute a propeptide, activation peptide. The region spanning 78-399 (YFGEIGLGTP…MKSSARVGLA (322 aa)) is the Peptidase A1 domain. N-linked (GlcNAc...) asparagine glycosylation is present at N90. The active site involves D96. C109 and C116 are disulfide-bonded. N-linked (GlcNAc...) asparagine glycosylation is present at N133. C274 and C278 are joined by a disulfide. The active site involves D283. A disulfide bridge connects residues C317 and C354. Residue N336 is glycosylated (N-linked (GlcNAc...) asparagine).

It belongs to the peptidase A1 family. In terms of tissue distribution, expressed predominantly in adult lung (type II pneumocytes) and kidney and in fetal lung. Low levels in adult spleen and very low levels in peripheral blood leukocytes.

The protein resides in the secreted. Its function is as follows. May be involved in processing of pneumocyte surfactant precursors. The chain is Napsin-A (NAPSA) from Homo sapiens (Human).